Here is a 489-residue protein sequence, read N- to C-terminus: Acetyl-coenzyme A carboxylase carboxyl transferase subunit beta, chloroplastic (489 aa).

The CoA carboxyltransferase N-terminal domain occupies 222–489; sequence LWVQCENCYG…FFPLNSNSIK (268 aa). Zn(2+) contacts are provided by C226, C229, C245, and C248. The segment at 226-248 adopts a C4-type zinc-finger fold; it reads CENCYGLNYKKFFRSKMNICEQC.

The protein belongs to the AccD/PCCB family. As to quaternary structure, acetyl-CoA carboxylase is a heterohexamer composed of biotin carboxyl carrier protein, biotin carboxylase and 2 subunits each of ACCase subunit alpha and ACCase plastid-coded subunit beta (accD). The cofactor is Zn(2+).

Its subcellular location is the plastid. The protein localises to the chloroplast stroma. The enzyme catalyses N(6)-carboxybiotinyl-L-lysyl-[protein] + acetyl-CoA = N(6)-biotinyl-L-lysyl-[protein] + malonyl-CoA. Its pathway is lipid metabolism; malonyl-CoA biosynthesis; malonyl-CoA from acetyl-CoA: step 1/1. In terms of biological role, component of the acetyl coenzyme A carboxylase (ACC) complex. Biotin carboxylase (BC) catalyzes the carboxylation of biotin on its carrier protein (BCCP) and then the CO(2) group is transferred by the transcarboxylase to acetyl-CoA to form malonyl-CoA. This chain is Acetyl-coenzyme A carboxylase carboxyl transferase subunit beta, chloroplastic, found in Buxus microphylla (Littleleaf boxwood).